Reading from the N-terminus, the 896-residue chain is Trehalose-phosphatase (896 aa).

Residues 1-554 (MTTTAQDNSP…SNDDMERKMT (554 aa)) are glycosyltransferase.

It in the N-terminal section; belongs to the glycosyltransferase 20 family. The protein in the C-terminal section; belongs to the trehalose phosphatase family. The trehalose synthase complex is composed of the two catalytic subunits TPS1 and TPS2, and at least one of the two regulatory subunits TPS3 or TSL1. Mg(2+) is required as a cofactor.

It localises to the cytoplasm. It catalyses the reaction alpha,alpha-trehalose 6-phosphate + H2O = alpha,alpha-trehalose + phosphate. Its pathway is carbohydrate biosynthesis. Its activity is regulated as follows. Inhibited by EDTA. In terms of biological role, phosphatase catalytic subunit of the trehalose synthase complex that catalyzes the production of trehalose from glucose-6-phosphate and UDP-alpha-D-glucose in a two step process. This Saccharomyces cerevisiae (strain ATCC 204508 / S288c) (Baker's yeast) protein is Trehalose-phosphatase.